The sequence spans 98 residues: Acylphosphatase-1 (98 aa).

One can recognise an Acylphosphatase-like domain in the interval 8 to 98; sequence SVDYEVFGKV…LEHSTFSICK (91 aa). Active-site residues include R23 and N41.

The protein belongs to the acylphosphatase family.

The enzyme catalyses an acyl phosphate + H2O = a carboxylate + phosphate + H(+). The sequence is that of Acylphosphatase-1 (acyp1) from Xenopus tropicalis (Western clawed frog).